Reading from the N-terminus, the 309-residue chain is 4-hydroxy-3-methylbut-2-enyl diphosphate reductase (309 aa).

C12 is a binding site for [4Fe-4S] cluster. (2E)-4-hydroxy-3-methylbut-2-enyl diphosphate-binding residues include H41 and H74. The dimethylallyl diphosphate site is built by H41 and H74. H41 and H74 together coordinate isopentenyl diphosphate. C96 contributes to the [4Fe-4S] cluster binding site. H124 lines the (2E)-4-hydroxy-3-methylbut-2-enyl diphosphate pocket. Residue H124 participates in dimethylallyl diphosphate binding. H124 contributes to the isopentenyl diphosphate binding site. The active-site Proton donor is E126. T167 provides a ligand contact to (2E)-4-hydroxy-3-methylbut-2-enyl diphosphate. Residue C197 coordinates [4Fe-4S] cluster. (2E)-4-hydroxy-3-methylbut-2-enyl diphosphate contacts are provided by S225, S226, N227, and S269. 4 residues coordinate dimethylallyl diphosphate: S225, S226, N227, and S269. Positions 225, 226, 227, and 269 each coordinate isopentenyl diphosphate.

The protein belongs to the IspH family. [4Fe-4S] cluster is required as a cofactor.

The enzyme catalyses isopentenyl diphosphate + 2 oxidized [2Fe-2S]-[ferredoxin] + H2O = (2E)-4-hydroxy-3-methylbut-2-enyl diphosphate + 2 reduced [2Fe-2S]-[ferredoxin] + 2 H(+). It carries out the reaction dimethylallyl diphosphate + 2 oxidized [2Fe-2S]-[ferredoxin] + H2O = (2E)-4-hydroxy-3-methylbut-2-enyl diphosphate + 2 reduced [2Fe-2S]-[ferredoxin] + 2 H(+). It participates in isoprenoid biosynthesis; dimethylallyl diphosphate biosynthesis; dimethylallyl diphosphate from (2E)-4-hydroxy-3-methylbutenyl diphosphate: step 1/1. The protein operates within isoprenoid biosynthesis; isopentenyl diphosphate biosynthesis via DXP pathway; isopentenyl diphosphate from 1-deoxy-D-xylulose 5-phosphate: step 6/6. Its function is as follows. Catalyzes the conversion of 1-hydroxy-2-methyl-2-(E)-butenyl 4-diphosphate (HMBPP) into a mixture of isopentenyl diphosphate (IPP) and dimethylallyl diphosphate (DMAPP). Acts in the terminal step of the DOXP/MEP pathway for isoprenoid precursor biosynthesis. The polypeptide is 4-hydroxy-3-methylbut-2-enyl diphosphate reductase (Shewanella halifaxensis (strain HAW-EB4)).